We begin with the raw amino-acid sequence, 245 residues long: DNA repair protein RecO (245 aa).

The protein belongs to the RecO family.

Functionally, involved in DNA repair and RecF pathway recombination. This is DNA repair protein RecO from Bartonella bacilliformis (strain ATCC 35685 / KC583 / Herrer 020/F12,63).